A 103-amino-acid polypeptide reads, in one-letter code: Putative double-stranded DNA mimic protein APJL_1366 (103 aa).

Belongs to the putative dsDNA mimic protein family.

Its function is as follows. May act as a double-stranded DNA (dsDNA) mimic. Probably regulates the activity of a dsDNA-binding protein. The protein is Putative double-stranded DNA mimic protein APJL_1366 of Actinobacillus pleuropneumoniae serotype 3 (strain JL03).